A 466-amino-acid polypeptide reads, in one-letter code: Dihydrolipoyl dehydrogenase 3 (466 aa).

Residues 33–42 (EGRSTLGGTC), lysine 51, and glycine 115 each bind FAD. A disulfide bond links cysteine 42 and cysteine 47. NAD(+) contacts are provided by residues 181 to 185 (GAGVI), glutamate 204, valine 238, and 271 to 274 (AIGR). The FAD site is built by aspartate 313 and alanine 321. The Proton acceptor role is filled by histidine 445.

Belongs to the class-I pyridine nucleotide-disulfide oxidoreductase family. As to quaternary structure, homodimer. FAD serves as cofactor.

It is found in the cytoplasm. The catalysed reaction is N(6)-[(R)-dihydrolipoyl]-L-lysyl-[protein] + NAD(+) = N(6)-[(R)-lipoyl]-L-lysyl-[protein] + NADH + H(+). LPD-3 may substitute for lipoamide dehydrogenase of the 2-oxoglutarate dehydrogenase and pyruvate multienzyme complexes when the latter is inactive or missing. This Pseudomonas putida (Arthrobacter siderocapsulatus) protein is Dihydrolipoyl dehydrogenase 3 (lpd3).